Reading from the N-terminus, the 291-residue chain is Porphobilinogen deaminase (291 aa).

S-(dipyrrolylmethanemethyl)cysteine is present on Cys237.

Belongs to the HMBS family. Monomer. It depends on dipyrromethane as a cofactor.

The enzyme catalyses 4 porphobilinogen + H2O = hydroxymethylbilane + 4 NH4(+). It functions in the pathway porphyrin-containing compound metabolism; protoporphyrin-IX biosynthesis; coproporphyrinogen-III from 5-aminolevulinate: step 2/4. Its function is as follows. Tetrapolymerization of the monopyrrole PBG into the hydroxymethylbilane pre-uroporphyrinogen in several discrete steps. This Clostridium acetobutylicum (strain ATCC 824 / DSM 792 / JCM 1419 / IAM 19013 / LMG 5710 / NBRC 13948 / NRRL B-527 / VKM B-1787 / 2291 / W) protein is Porphobilinogen deaminase.